A 103-amino-acid polypeptide reads, in one-letter code: Histone H4 (103 aa).

The segment at 1-32 is disordered; sequence MNTQSIGAKGKSKAAKGIAKRHRKQSSLSDSI. Positions 10–25 are enriched in basic residues; that stretch reads GKSKAAKGIAKRHRKQ. Position 16 is an N6-acetyl-N6-methyllysine; alternate (K16). K16 is modified (N6-methyllysine; alternate). Residues 20-24 mediate DNA binding; sequence KRHRK. Position 94 is an N6-glutaryllysine (K94).

This sequence belongs to the histone H4 family. The nucleosome is a histone octamer containing two molecules each of H2A, H2B, H3 and H4 assembled in one H3-H4 heterotetramer and two H2A-H2B heterodimers. The octamer wraps approximately 147 bp of DNA. Glutarylation at Lys-94 (H4K91glu) destabilizes nucleosomes by promoting dissociation of the H2A-H2B dimers from nucleosomes.

It is found in the nucleus. The protein resides in the chromosome. Core component of nucleosome. Nucleosomes wrap and compact DNA into chromatin, limiting DNA accessibility to the cellular machineries which require DNA as a template. Histones thereby play a central role in transcription regulation, DNA repair, DNA replication and chromosomal stability. DNA accessibility is regulated via a complex set of post-translational modifications of histones, also called histone code, and nucleosome remodeling. This chain is Histone H4 (HHF1), found in Encephalitozoon cuniculi (strain GB-M1) (Microsporidian parasite).